A 375-amino-acid chain; its full sequence is Alcohol dehydrogenase 6 (375 aa).

C47, H69, C99, C102, C105, C113, and C175 together coordinate Zn(2+). Residues 200-205 (GLGGVG), D224, K229, 293-295 (VGS), and R370 each bind NAD(+).

It belongs to the zinc-containing alcohol dehydrogenase family. Class-V subfamily. In terms of assembly, dimer. Zn(2+) is required as a cofactor. Liver.

The protein resides in the cytoplasm. The enzyme catalyses a primary alcohol + NAD(+) = an aldehyde + NADH + H(+). The catalysed reaction is a secondary alcohol + NAD(+) = a ketone + NADH + H(+). Its function is as follows. Alcohol dehydrogenase. Catalyzes the NAD-dependent oxidation of primary alcohols to the corresponding aldehydes. Oxidizes secondary alcohols to the corresponding ketones. The polypeptide is Alcohol dehydrogenase 6 (ADH6) (Peromyscus maniculatus (North American deer mouse)).